We begin with the raw amino-acid sequence, 457 residues long: Siroheme synthase (457 aa).

Positions 1–204 (MDHLPIFCQL…NDQKAITETT (204 aa)) are precorrin-2 dehydrogenase /sirohydrochlorin ferrochelatase. Residues 22–23 (DV) and 43–44 (LA) contribute to the NAD(+) site. The residue at position 128 (serine 128) is a Phosphoserine. The tract at residues 216 to 457 (GEVVLVGAGP…RDKLNWFSNH (242 aa)) is uroporphyrinogen-III C-methyltransferase. An S-adenosyl-L-methionine-binding site is contributed by proline 225. Aspartate 248 acts as the Proton acceptor in catalysis. Catalysis depends on lysine 270, which acts as the Proton donor. Residues 301–303 (GGD), isoleucine 306, 331–332 (TA), methionine 382, and glycine 411 contribute to the S-adenosyl-L-methionine site.

This sequence in the N-terminal section; belongs to the precorrin-2 dehydrogenase / sirohydrochlorin ferrochelatase family. The protein in the C-terminal section; belongs to the precorrin methyltransferase family.

The enzyme catalyses uroporphyrinogen III + 2 S-adenosyl-L-methionine = precorrin-2 + 2 S-adenosyl-L-homocysteine + H(+). The catalysed reaction is precorrin-2 + NAD(+) = sirohydrochlorin + NADH + 2 H(+). It catalyses the reaction siroheme + 2 H(+) = sirohydrochlorin + Fe(2+). The protein operates within cofactor biosynthesis; adenosylcobalamin biosynthesis; precorrin-2 from uroporphyrinogen III: step 1/1. Its pathway is cofactor biosynthesis; adenosylcobalamin biosynthesis; sirohydrochlorin from precorrin-2: step 1/1. It participates in porphyrin-containing compound metabolism; siroheme biosynthesis; precorrin-2 from uroporphyrinogen III: step 1/1. It functions in the pathway porphyrin-containing compound metabolism; siroheme biosynthesis; siroheme from sirohydrochlorin: step 1/1. The protein operates within porphyrin-containing compound metabolism; siroheme biosynthesis; sirohydrochlorin from precorrin-2: step 1/1. Multifunctional enzyme that catalyzes the SAM-dependent methylations of uroporphyrinogen III at position C-2 and C-7 to form precorrin-2 via precorrin-1. Then it catalyzes the NAD-dependent ring dehydrogenation of precorrin-2 to yield sirohydrochlorin. Finally, it catalyzes the ferrochelation of sirohydrochlorin to yield siroheme. In Shigella boydii serotype 18 (strain CDC 3083-94 / BS512), this protein is Siroheme synthase.